Consider the following 49-residue polypeptide: Large ribosomal subunit protein bL33 (49 aa).

It belongs to the bacterial ribosomal protein bL33 family.

The protein is Large ribosomal subunit protein bL33 (rpmG) of Thermotoga maritima (strain ATCC 43589 / DSM 3109 / JCM 10099 / NBRC 100826 / MSB8).